A 428-amino-acid chain; its full sequence is UPF0229 protein YeaH (428 aa).

Residues 78–90 show a composition bias toward basic and acidic residues; it reads GNDHFIQNDRIER. Positions 78-111 are disordered; that stretch reads GNDHFIQNDRIERPQGGGGGGSGSGQGQASQDGE. A compositionally biased stretch (gly residues) spans 92–103; it reads QGGGGGGSGSGQ.

Belongs to the UPF0229 family.

The chain is UPF0229 protein YeaH from Salmonella enteritidis PT4 (strain P125109).